Reading from the N-terminus, the 642-residue chain is MPVITLPDGSQRQFENAVSVLDVAASIGAGLAKACIAGRVNGELVDACELIETDATLSIITAKDQEGLEILRHSCAHLLGHAIKQLWPQTKMAIGPVIDNGFYYDVDLDQMLTEEDIQALEARMLELAQKDYDVVKKTVSWQEARDVFESRSETYKVAILDENIARDDKPGLYHHEEYIDMCRGPHVPNMRFCHHFKLQKTSGAYWRGDAKNKMLQRIYGTAWADKKQLNAYLQRLEEAAKRDHRKIGKQLDLYHMQEEAPGMVFWHNDGWIIFRELETFIRQKLREYDYEEVKGPFMMDRVLWERSGHWDKYADAMFTTSSENREYAIKPMNCPGHVQIFNQGLKSYRDLPLRMAEFGSCHRNEPSGSLHGLMRVRGFTQDDAHIFCAENQIQDEVSACIRMVYDTYSTFGFKNIAVKLSTRPEKRIGSDEMWDRAEEALSAALKHNNIEFDLQPGEGAFYGPKIEFTLHDCLDRAWQCGTVQLDFALPGRLGATYVGEDNDRHVPVMIHRAILGSMERFIGILTEETAGYFPLWLAPLQAVVMNITDNQADYVKEVVNTLNESGIRAKADLRNEKIGFKIREHTLKRVPYMLVCGDKEMEAGEIAVRTRRGVDLGKFKVTDLVEQLRKEISTRVLNVVEE.

In terms of domain architecture, TGS spans 1–61 (MPVITLPDGS…ETDATLSIIT (61 aa)). Positions 243 to 534 (DHRKIGKQLD…LTEETAGYFP (292 aa)) are catalytic. The Zn(2+) site is built by cysteine 334, histidine 385, and histidine 511.

This sequence belongs to the class-II aminoacyl-tRNA synthetase family. Homodimer. Zn(2+) is required as a cofactor.

It is found in the cytoplasm. The enzyme catalyses tRNA(Thr) + L-threonine + ATP = L-threonyl-tRNA(Thr) + AMP + diphosphate + H(+). In terms of biological role, catalyzes the attachment of threonine to tRNA(Thr) in a two-step reaction: L-threonine is first activated by ATP to form Thr-AMP and then transferred to the acceptor end of tRNA(Thr). Also edits incorrectly charged L-seryl-tRNA(Thr). The protein is Threonine--tRNA ligase of Tolumonas auensis (strain DSM 9187 / NBRC 110442 / TA 4).